The chain runs to 274 residues: 2,3,4,5-tetrahydropyridine-2,6-dicarboxylate N-succinyltransferase (274 aa).

Arginine 106 and aspartate 143 together coordinate substrate.

It belongs to the transferase hexapeptide repeat family. As to quaternary structure, homotrimer.

Its subcellular location is the cytoplasm. It carries out the reaction (S)-2,3,4,5-tetrahydrodipicolinate + succinyl-CoA + H2O = (S)-2-succinylamino-6-oxoheptanedioate + CoA. It participates in amino-acid biosynthesis; L-lysine biosynthesis via DAP pathway; LL-2,6-diaminopimelate from (S)-tetrahydrodipicolinate (succinylase route): step 1/3. This Albidiferax ferrireducens (strain ATCC BAA-621 / DSM 15236 / T118) (Rhodoferax ferrireducens) protein is 2,3,4,5-tetrahydropyridine-2,6-dicarboxylate N-succinyltransferase.